The following is a 69-amino-acid chain: Light-harvesting protein B-870 beta chain (69 aa).

Residues 1-2 (MA) constitute a propeptide that is removed on maturation. Over 3–22 (EVKQESLSGITEGEAKEFHK) the chain is Cytoplasmic. Positions 21 and 39 each coordinate a bacteriochlorophyll. A helical transmembrane segment spans residues 23 to 45 (IFTSSILVFFGVAAFAHLLVWIW). The Periplasmic segment spans residues 46-56 (RPWVPGPNGYS). Positions 57–69 (ALETLTQTLTYLS) are excised as a propeptide.

Belongs to the antenna complex beta subunit family. As to quaternary structure, the core complex is formed by different alpha and beta chains, binding bacteriochlorophyll molecules, and arranged most probably in tetrameric structures disposed around the reaction center. The non-pigmented gamma chains may constitute additional components.

The protein localises to the cell inner membrane. Its function is as follows. Antenna complexes are light-harvesting systems, which transfer the excitation energy to the reaction centers. This chain is Light-harvesting protein B-870 beta chain, found in Rhodospirillum rubrum (strain ATCC 11170 / ATH 1.1.1 / DSM 467 / LMG 4362 / NCIMB 8255 / S1).